The primary structure comprises 525 residues: GMP synthase [glutamine-hydrolyzing] (525 aa).

In terms of domain architecture, Glutamine amidotransferase type-1 spans Arg-9–Leu-207. Cys-86 serves as the catalytic Nucleophile. Catalysis depends on residues His-181 and Glu-183. Residues Trp-208 to Arg-400 form the GMPS ATP-PPase domain. Ser-235–Ser-241 provides a ligand contact to ATP.

Homodimer.

The enzyme catalyses XMP + L-glutamine + ATP + H2O = GMP + L-glutamate + AMP + diphosphate + 2 H(+). The protein operates within purine metabolism; GMP biosynthesis; GMP from XMP (L-Gln route): step 1/1. Its function is as follows. Catalyzes the synthesis of GMP from XMP. This chain is GMP synthase [glutamine-hydrolyzing], found in Salmonella arizonae (strain ATCC BAA-731 / CDC346-86 / RSK2980).